A 188-amino-acid chain; its full sequence is Probable DNA-directed RNA polymerase subunit delta (188 aa).

One can recognise an HTH HARE-type domain in the interval 14–83 (LSMIEVARAI…GENKWGLRSW (70 aa)). Residues 119 to 188 (EDAIDYSADD…EDEEDEEEEE (70 aa)) form a disordered region.

The protein belongs to the RpoE family. RNAP is composed of a core of 2 alpha, a beta and a beta' subunits. The core is associated with a delta subunit and one of several sigma factors.

Functionally, participates in both the initiation and recycling phases of transcription. In the presence of the delta subunit, RNAP displays an increased specificity of transcription, a decreased affinity for nucleic acids, and an increased efficiency of RNA synthesis because of enhanced recycling. The protein is Probable DNA-directed RNA polymerase subunit delta of Streptococcus equi subsp. equi (strain 4047).